A 250-amino-acid chain; its full sequence is 2,3-bisphosphoglycerate-dependent phosphoglycerate mutase (250 aa).

Residues 10 to 17 (RHGESQWN), 23 to 24 (TG), Arg62, 89 to 92 (ERHY), Lys100, 116 to 117 (RR), and 185 to 186 (GN) each bind substrate. The active-site Tele-phosphohistidine intermediate is the His11. Glu89 functions as the Proton donor/acceptor in the catalytic mechanism.

Belongs to the phosphoglycerate mutase family. BPG-dependent PGAM subfamily. Homodimer.

It catalyses the reaction (2R)-2-phosphoglycerate = (2R)-3-phosphoglycerate. The protein operates within carbohydrate degradation; glycolysis; pyruvate from D-glyceraldehyde 3-phosphate: step 3/5. Its function is as follows. Catalyzes the interconversion of 2-phosphoglycerate and 3-phosphoglycerate. The sequence is that of 2,3-bisphosphoglycerate-dependent phosphoglycerate mutase from Pectobacterium atrosepticum (strain SCRI 1043 / ATCC BAA-672) (Erwinia carotovora subsp. atroseptica).